Here is a 213-residue protein sequence, read N- to C-terminus: DNA-directed RNA polymerase subunit alpha (213 aa).

Belongs to the RNA polymerase alpha chain family. As to quaternary structure, in plastids the minimal PEP RNA polymerase catalytic core is composed of four subunits: alpha, beta, beta', and beta''. When a (nuclear-encoded) sigma factor is associated with the core the holoenzyme is formed, which can initiate transcription.

The protein localises to the plastid. It is found in the chloroplast. It catalyses the reaction RNA(n) + a ribonucleoside 5'-triphosphate = RNA(n+1) + diphosphate. Functionally, DNA-dependent RNA polymerase catalyzes the transcription of DNA into RNA using the four ribonucleoside triphosphates as substrates. This is DNA-directed RNA polymerase subunit alpha (rpoA) from Euglena stellata.